The chain runs to 184 residues: Isopentenyl-diphosphate Delta-isomerase (184 aa).

The Mn(2+) site is built by His25 and His32. One can recognise a Nudix hydrolase domain in the interval 30 to 164 (PLHLAFSCWL…PWAFSPWMVL (135 aa)). Cys67 is an active-site residue. Residue His69 participates in Mn(2+) binding. Glu87 provides a ligand contact to Mg(2+). The Mn(2+) site is built by Glu114 and Glu116. Glu116 is a catalytic residue.

Belongs to the IPP isomerase type 1 family. Homodimer. Requires Mg(2+) as cofactor. Mn(2+) serves as cofactor.

Its subcellular location is the cytoplasm. It carries out the reaction isopentenyl diphosphate = dimethylallyl diphosphate. It functions in the pathway isoprenoid biosynthesis; dimethylallyl diphosphate biosynthesis; dimethylallyl diphosphate from isopentenyl diphosphate: step 1/1. Its function is as follows. Catalyzes the 1,3-allylic rearrangement of the homoallylic substrate isopentenyl (IPP) to its highly electrophilic allylic isomer, dimethylallyl diphosphate (DMAPP). The protein is Isopentenyl-diphosphate Delta-isomerase of Klebsiella pneumoniae (strain 342).